Reading from the N-terminus, the 298-residue chain is Ethylmalonyl-CoA decarboxylase (298 aa).

It belongs to the enoyl-CoA hydratase/isomerase family.

It is found in the cytoplasm. The protein resides in the cytosol. It catalyses the reaction (2S)-ethylmalonyl-CoA + H(+) = butanoyl-CoA + CO2. The enzyme catalyses (S)-methylmalonyl-CoA + H(+) = propanoyl-CoA + CO2. The catalysed reaction is (2R)-ethylmalonyl-CoA + H(+) = butanoyl-CoA + CO2. Decarboxylates ethylmalonyl-CoA, a potentially toxic metabolite, to form butyryl-CoA, suggesting it might be involved in metabolite proofreading. Acts preferentially on (S)-ethylmalonyl-CoA but also has some activity on the (R)-isomer. Also has methylmalonyl-CoA decarboxylase activity at lower level. This is Ethylmalonyl-CoA decarboxylase (ECHDC1) from Gallus gallus (Chicken).